A 236-amino-acid chain; its full sequence is Pyridoxal phosphate homeostasis protein (236 aa).

An N6-(pyridoxal phosphate)lysine modification is found at Lys36.

This sequence belongs to the pyridoxal phosphate-binding protein YggS/PROSC family.

Functionally, pyridoxal 5'-phosphate (PLP)-binding protein, which is involved in PLP homeostasis. This Vibrio cholerae serotype O1 (strain ATCC 39315 / El Tor Inaba N16961) protein is Pyridoxal phosphate homeostasis protein.